The chain runs to 418 residues: Putative ion-transport protein YfeO (418 aa).

12 consecutive transmembrane segments (helical) span residues 10–30, 54–74, 99–119, 120–140, 149–169, 186–206, 223–243, 258–278, 300–320, 322–342, 343–363, and 371–391; these read LLLSLPAVAIGIASSLILIVV, DSPFWIIAILTLTGIAVGLVI, ALPGLIVALILGLAGGVSLGP, EHPIMTVNIALAVAIGARLLP, ILASAGTIGALFGTPVAAALI, LFAPLMAAAAGALTTGLFFHP, ILSGAIVAAIAIAAGMVAVWC, VLMLGVGGFILGILGVIAGPV, DYFLLAVIKLAALVVAAASGF, GGRIFPAVFVGVALGLMLHEH, VPAVPAAITVSCAILGIVLVV, and LFMAAVVVPNTTLLPLLCIVM.

This sequence belongs to the chloride channel (TC 2.A.49) family.

It is found in the cell membrane. The polypeptide is Putative ion-transport protein YfeO (Escherichia coli (strain SMS-3-5 / SECEC)).